The sequence spans 423 residues: Methanol:N,N-dimethyl-4-nitrosoaniline oxidoreductase (423 aa).

This sequence belongs to the iron-containing alcohol dehydrogenase family. As to quaternary structure, homodecamer. Mg(2+) is required as a cofactor. The cofactor is Zn(2+). It depends on NADPH as a cofactor.

The catalysed reaction is methanol + A = formaldehyde + AH2. In terms of biological role, catalyzes the oxidation of methanol to yield formaldehyde. While the in vivo electron acceptor is not known, N,N-dimethyl-4-nitrosoaniline (NDMA) can serve this function in vitro and is reduced to 4-(hydroxylamino)-N,N-dimethylaniline. The protein is Methanol:N,N-dimethyl-4-nitrosoaniline oxidoreductase (thcE) of Rhodococcus erythropolis (Arthrobacter picolinophilus).